Consider the following 264-residue polypeptide: Thymidylate synthase (264 aa).

DUMP is bound by residues R21 and 126–127 (RR). Catalysis depends on C146, which acts as the Nucleophile. Residues 166–169 (RSAD), N177, and 207–209 (HLY) each bind dUMP. D169 provides a ligand contact to (6R)-5,10-methylene-5,6,7,8-tetrahydrofolate. A263 serves as a coordination point for (6R)-5,10-methylene-5,6,7,8-tetrahydrofolate.

Belongs to the thymidylate synthase family. Bacterial-type ThyA subfamily. As to quaternary structure, homodimer.

Its subcellular location is the cytoplasm. The catalysed reaction is dUMP + (6R)-5,10-methylene-5,6,7,8-tetrahydrofolate = 7,8-dihydrofolate + dTMP. Its pathway is pyrimidine metabolism; dTTP biosynthesis. Functionally, catalyzes the reductive methylation of 2'-deoxyuridine-5'-monophosphate (dUMP) to 2'-deoxythymidine-5'-monophosphate (dTMP) while utilizing 5,10-methylenetetrahydrofolate (mTHF) as the methyl donor and reductant in the reaction, yielding dihydrofolate (DHF) as a by-product. This enzymatic reaction provides an intracellular de novo source of dTMP, an essential precursor for DNA biosynthesis. The chain is Thymidylate synthase from Halorhodospira halophila (strain DSM 244 / SL1) (Ectothiorhodospira halophila (strain DSM 244 / SL1)).